Here is a 362-residue protein sequence, read N- to C-terminus: Probable dual-specificity RNA methyltransferase RlmN (362 aa).

Glu91 serves as the catalytic Proton acceptor. The 233-residue stretch at Gln97–Arg329 folds into the Radical SAM core domain. A disulfide bridge connects residues Cys104 and Cys340. 3 residues coordinate [4Fe-4S] cluster: Cys111, Cys115, and Cys118. S-adenosyl-L-methionine-binding positions include Gly163–Glu164, Ser195, Ser218–His220, and Asn296. Residue Cys340 is the S-methylcysteine intermediate of the active site.

The protein belongs to the radical SAM superfamily. RlmN family. [4Fe-4S] cluster serves as cofactor.

It localises to the cytoplasm. It catalyses the reaction adenosine(2503) in 23S rRNA + 2 reduced [2Fe-2S]-[ferredoxin] + 2 S-adenosyl-L-methionine = 2-methyladenosine(2503) in 23S rRNA + 5'-deoxyadenosine + L-methionine + 2 oxidized [2Fe-2S]-[ferredoxin] + S-adenosyl-L-homocysteine. The enzyme catalyses adenosine(37) in tRNA + 2 reduced [2Fe-2S]-[ferredoxin] + 2 S-adenosyl-L-methionine = 2-methyladenosine(37) in tRNA + 5'-deoxyadenosine + L-methionine + 2 oxidized [2Fe-2S]-[ferredoxin] + S-adenosyl-L-homocysteine. Its function is as follows. Specifically methylates position 2 of adenine 2503 in 23S rRNA and position 2 of adenine 37 in tRNAs. This is Probable dual-specificity RNA methyltransferase RlmN from Streptococcus sanguinis (strain SK36).